The following is a 2162-amino-acid chain: Calpain-type cysteine protease ADL1 (2162 aa).

Residues 1–33 (MEEEEHRGVVLVCSICGFLFAVLGPLSFWILWA) form the signal peptide. At 34 to 70 (VNWRPWRLYSWIYARKWPAYVQGPQLSTLCSFFTLFA) the chain is on the extracellular side. Residues 71-91 (WLVVVSPITVLLVWGGILIAL) traverse the membrane as a helical segment. Over 92–95 (LERN) the chain is Cytoplasmic. Residues 96-116 (IIGLAVIMVGVALLLSFYSIM) traverse the membrane as a helical segment. Residues 117–127 (LWWRTQWQSSK) are Extracellular-facing. Residues 128–148 (AVAYLLLLAVGLLCAYEFCAV) traverse the membrane as a helical segment. At 149–164 (YVTTGASASELNSPSG) the chain is on the cytoplasmic side. Residues 165 to 185 (FFFGVSAISLAINMLFISKIL) form a helical membrane-spanning segment. Topologically, residues 186 to 236 (FNGSGFDVDEYVRRLYKFAYSDCVEVAPVSCSPDPPDPSELYMTKSSRVLH) are extracellular. A helical membrane pass occupies residues 237–257 (LGLLYLCSLMVLVVYSILYGL). At 258–264 (TSKEARW) the chain is on the cytoplasmic side. A helical membrane pass occupies residues 265–285 (LGALTSVAVVILDWNLGLCSF). Residues 286–294 (RFELLKSRM) are Extracellular-facing. The chain crosses the membrane as a helical span at residues 295-315 (IALFVAGTSRVFLICFGVHYW). Topologically, residues 316-320 (YLGHC) are cytoplasmic. The chain crosses the membrane as a helical span at residues 321 to 341 (ISYAFVASVLLAAAVSCWLSI). Residues 342 to 626 (SNPSVARIDA…LMFHQVAGSP (285 aa)) are Extracellular-facing. Residues 366–403 (KGQTSSSNSSDGCGSSVKRSSGSVEAGPHGNATDSMYR) are disordered. Residues 370-381 (SSSNSSDGCGSS) show a composition bias toward low complexity. The chain crosses the membrane as a helical span at residues 627 to 647 (IRAFVVFTLIFIIETVTVAVH). Residues 648-663 (RPKPIKVINATHEQFE) lie on the Cytoplasmic side of the membrane. The helical transmembrane segment at 664–684 (FGFSILLLSPVVCSIMAFIWS) threads the bilayer. Topologically, residues 685-697 (LCAEEMTMTSKPR) are extracellular. A helical transmembrane segment spans residues 698–718 (KYGFIAWLLSTCVGLLLSFLS). Residues 719 to 722 (KSSV) lie on the Cytoplasmic side of the membrane. The chain crosses the membrane as a helical span at residues 723-743 (ILGLSLTVPLMVACLSFAIPI). Residues 744 to 773 (WMRNGYRFWIPGGELDSRENIRQAPGKKER) lie on the Extracellular side of the membrane. Residues 774–794 (ALFAISITVFTASVIGLGAIV) form a helical membrane-spanning segment. At 795–825 (SAKPLDALGYKGWDADKKSFYSPYATSMYLG) the chain is on the cytoplasmic side. A helical membrane pass occupies residues 826–846 (WALSSTIAVLATGVIPIVAWF). The Extracellular segment spans residues 847 to 856 (ATYRFSPSSA). Residues 857 to 877 (ICVGLFATVLVSFCGVSYWGV) traverse the membrane as a helical segment. Over 878–890 (VNSRQDGVPLKAD) the chain is Cytoplasmic. A helical transmembrane segment spans residues 891–911 (FLAALLPLLCIPAVFSLFTGM). The Extracellular portion of the chain corresponds to 912–924 (YKWKDDDWKISRG). Residues 925-945 (VYLFVGMGVLLLLGAISAVIV) traverse the membrane as a helical segment. Topologically, residues 946-949 (TIRP) are cytoplasmic. The helical transmembrane segment at 950–970 (WTVGVACLLVILFLVFAIGVI) threads the bilayer. Residues 971 to 984 (HYWTSNNFYLTRTQ) lie on the Extracellular side of the membrane. Residues 985 to 1005 (MLLVCSLAFLLALAAFLMGLF) form a helical membrane-spanning segment. The Cytoplasmic portion of the chain corresponds to 1006 to 1019 (QEKPFVGASIGYFS). Residues 1020–1040 (FLFLLTGRALTVLLSPPIVVY) traverse the membrane as a helical segment. At 1041–1063 (SPRVLPVYVYDAHADSAKNVSYA) the chain is on the extracellular side. The helical transmembrane segment at 1064-1084 (FLILYGIALATEVWGVIASLI) threads the bilayer. The Cytoplasmic portion of the chain corresponds to 1085 to 2162 (LNPPFIGAAI…TKAPIKLEAV (1078 aa)). Phosphoserine is present on residues Ser1372 and Ser1377. The Calpain catalytic 1 domain maps to 1418–1611 (TGRHCGEIDL…ICSAEYGLFD (194 aa)). Phosphoserine is present on Ser1668. The Calpain catalytic 2 domain maps to 1706–2008 (NFTDQEFPPD…FRSIYVCRVY (303 aa)). Catalysis depends on residues Cys1772, His1930, and Asn1950.

This sequence belongs to the peptidase C2 family. In terms of processing, autocatalytic proteolytic cleavage leading to the production of mainly cytoplasmic localized subproducts of about 85 and 120 kDa. Ubiquitously expressed with higher levels in embryos, vasculatures, leaf primordia, leaf margins, and shoot apical meristem (SAM).

The protein resides in the endoplasmic reticulum membrane. Its subcellular location is the cytoplasm. It localises to the cell membrane. The protein localises to the endosome membrane. Its function is as follows. Essential protease involved in epiderm development. Required for aleurone cell development in the endosperm probably by maintaining and restricting the aleurone and embryonic epidermal L1 cell-layer fates as well as meristems organization. Involved in the maintenance of adaxial/abaxial axis information in developing leaves, probably by regulating cell proliferation and expansion. Does not need calcium ions to be active. The polypeptide is Calpain-type cysteine protease ADL1 (ADL1) (Oryza sativa subsp. japonica (Rice)).